The following is a 413-amino-acid chain: MASSAGLALCAQTLVVRGGSRFLAFSTTGSDDDCVFTYDCSTAEKKATPEDKGEDGQPADTGSDSILASTFSKSGRYFALTDDSKRLILFRTKPWQCLSVRMVVRRCTALTFTASEDRVLVADKSGDVYSFSVLEPDGCGRLELGHLSMLLDVAVSPDDQFVLTADRDEKIRVSWAAAPHSIESFCLGHTEFVSRILVVPSHPELLLSSSGDGTLRLWEYRSGRQLQCCDLAGLQEPGEQPGHKGLAASRIAFWGQESYVVLLCECVPVVFVFQLDASRQQLVFRQRLTFPHRVWDVVFEEARGLWVLQDCRDAPLVLWRPVGGEWQAAPDGAVSPRLCSHLRESWAMLEGSVGTDDSFRSLYKATFDNMTSYLKKKEERLQQQLKKKRQRSPFPGSPEQTKKACPGQSALSC.

Alanine 2 carries the post-translational modification N-acetylalanine. 5 WD repeats span residues 61–100 (TGSDSILASTFSKSGRYFALTDDSKRLILFRTKPWQCLSV), 102–141 (MVVRRCTALTFTASEDRVLVADKSGDVYSFSVLEPDGCGR), 145–185 (GHLS…IESF), 188–228 (GHTE…QLQC), and 289–329 (TFPH…WQAA). The disordered stretch occupies residues 380–413 (RLQQQLKKKRQRSPFPGSPEQTKKACPGQSALSC). Phosphoserine occurs at positions 392 and 412.

It belongs to the WD repeat TRM82 family. In terms of assembly, non-catalytic component of the METTL1-WDR4 complex, composed of METTL1 and WDR4. Interacts with FEN1; the interaction is direct.

The protein resides in the nucleus. It is found in the chromosome. It functions in the pathway tRNA modification; N(7)-methylguanine-tRNA biosynthesis. In terms of biological role, non-catalytic component of the METTL1-WDR4 methyltransferase complex required for the formation of N(7)-methylguanine in a subset of RNA species, such as tRNAs, mRNAs and microRNAs (miRNAs). In the METTL1-WDR4 methyltransferase complex, WDR4 acts as a scaffold for tRNA-binding. Required for the formation of N(7)-methylguanine at position 46 (m7G46) in a large subset of tRNAs that contain the 5'-RAGGU-3' motif within the variable loop. M7G46 interacts with C13-G22 in the D-loop to stabilize tRNA tertiary structure and protect tRNAs from decay. Also required for the formation of N(7)-methylguanine at internal sites in a subset of mRNAs. Also required for methylation of a specific subset of miRNAs, such as let-7. Acts as a regulator of embryonic stem cell self-renewal and differentiation. Independently of METTL1, also plays a role in genome stability: localizes at the DNA replication site and regulates endonucleolytic activities of FEN1. This Mus musculus (Mouse) protein is tRNA (guanine-N(7)-)-methyltransferase non-catalytic subunit WDR4.